A 397-amino-acid chain; its full sequence is Meiotic driver wtf28 (397 aa).

2 disordered regions span residues 1–41 (MKNK…GNTL) and 65–102 (NWNK…SGTA). Residues 11-29 (SMDELSTKNDNEIDLEKGP) are compositionally biased toward basic and acidic residues. A run of 9 helical transmembrane segments spans residues 108–128 (FLIK…PAVC), 145–165 (WVYF…LWCF), 175–195 (VTVI…AQCV), 205–225 (CIKV…VGLY), 230–250 (DLVV…FGCV), 266–286 (SSIS…IWTL), 290–310 (LFGL…TKGL), 320–340 (ATGY…LFFY), and 357–377 (NGIA…ANAI).

Belongs to the WTF family. In terms of assembly, homomer. Forms protein aggregates. The two isoforms can interact with each other and with themselves. High sequence similarity is required for their interaction.

The protein localises to the spore membrane. It is found in the vacuole membrane. Its subcellular location is the ascus epiplasm. It localises to the cytoplasm. The protein resides in the endoplasmic reticulum membrane. In terms of biological role, promotes unequal transmission of alleles from the parental zygote to progeny spores by acting as poison/antidote system where the poison and antidote proteins are produced from the same locus; the poison component is trans-acting and targets all spores within an ascus whereas the antidote component is spore-specific, leading to poisoning of all progeny that do not inherit the allele. Localizes isoform 2 to the vacuole thereby facilitating its degradation. Functionally, forms toxic aggregates that disrupt spore maturation. In Schizosaccharomyces kambucha (Fission yeast), this protein is Meiotic driver wtf28.